Here is a 232-residue protein sequence, read N- to C-terminus: Ribonuclease 3 (232 aa).

Residues 5-134 (QTVLKNHFAI…FLGALLLDKD (130 aa)) enclose the RNase III domain. Residue Glu-47 coordinates Mg(2+). Asp-51 is a catalytic residue. Positions 120 and 123 each coordinate Mg(2+). Glu-123 is a catalytic residue. The DRBM domain occupies 160–229 (DYKTHLQELL…AKNAVEKGLD (70 aa)).

This sequence belongs to the ribonuclease III family. Homodimer. The cofactor is Mg(2+).

It localises to the cytoplasm. The catalysed reaction is Endonucleolytic cleavage to 5'-phosphomonoester.. Its function is as follows. Digests double-stranded RNA. Involved in the processing of primary rRNA transcript to yield the immediate precursors to the large and small rRNAs (23S and 16S). Processes some mRNAs, and tRNAs when they are encoded in the rRNA operon. Processes pre-crRNA and tracrRNA of type II CRISPR loci if present in the organism. In Streptococcus pneumoniae (strain CGSP14), this protein is Ribonuclease 3.